A 163-amino-acid polypeptide reads, in one-letter code: MAIFAEAETWVAIAFVILMGIFAYLGVHRTVLKALDNRRDRIKAELDEARKLKDEAAKLLADYRARRAQAEREAEAIVASAKADAERIAAESKAKLEDFVVRRTKTAESKIALAEAQALADVRAAAAEAAVSAAAIVLSQSVKGQVADDLLGKGIQEVRSKLN.

Residues 7–27 traverse the membrane as a helical segment; the sequence is AETWVAIAFVILMGIFAYLGV.

The protein belongs to the ATPase B chain family. F-type ATPases have 2 components, F(1) - the catalytic core - and F(0) - the membrane proton channel. F(1) has five subunits: alpha(3), beta(3), gamma(1), delta(1), epsilon(1). F(0) has three main subunits: a(1), b(2) and c(10-14). The alpha and beta chains form an alternating ring which encloses part of the gamma chain. F(1) is attached to F(0) by a central stalk formed by the gamma and epsilon chains, while a peripheral stalk is formed by the delta and b chains.

The protein localises to the cell inner membrane. F(1)F(0) ATP synthase produces ATP from ADP in the presence of a proton or sodium gradient. F-type ATPases consist of two structural domains, F(1) containing the extramembraneous catalytic core and F(0) containing the membrane proton channel, linked together by a central stalk and a peripheral stalk. During catalysis, ATP synthesis in the catalytic domain of F(1) is coupled via a rotary mechanism of the central stalk subunits to proton translocation. Its function is as follows. Component of the F(0) channel, it forms part of the peripheral stalk, linking F(1) to F(0). This is ATP synthase subunit b 1 from Rhodopseudomonas palustris (strain HaA2).